We begin with the raw amino-acid sequence, 121 residues long: LOB domain-containing protein 24 (121 aa).

The LOB domain occupies 4-105 (KRCAACKYLR…NELAKTQAEI (102 aa)).

Belongs to the LOB domain-containing protein family.

The polypeptide is LOB domain-containing protein 24 (LBD24) (Arabidopsis thaliana (Mouse-ear cress)).